A 135-amino-acid polypeptide reads, in one-letter code: Large ribosomal subunit protein bL19 (135 aa).

This sequence belongs to the bacterial ribosomal protein bL19 family.

Its function is as follows. This protein is located at the 30S-50S ribosomal subunit interface and may play a role in the structure and function of the aminoacyl-tRNA binding site. This chain is Large ribosomal subunit protein bL19, found in Xanthomonas axonopodis pv. citri (strain 306).